The chain runs to 446 residues: Eukaryotic translation initiation factor 2 subunit gamma (446 aa).

Positions 21 to 227 constitute a tr-type G domain; sequence QATINIGTIG…YIVKKIPIPV (207 aa). The G1 stretch occupies residues 30-37; that stretch reads GHVAHGKS. 33 to 38 contacts GTP; it reads AHGKST. Positions 58 to 62 are G2; it reads NITIK. A G3 region spans residues 114 to 117; that stretch reads DCPG. Residues 170–173 and 205–207 each bind GTP; these read NKVD and SAQ. Residues 170–173 form a G4 region; it reads NKVD. The segment at 205-207 is G5; it reads SAQ. The segment at 436 to 446 is interacts with cdc123; that stretch reads AKVVEGKTLKV.

This sequence belongs to the TRAFAC class translation factor GTPase superfamily. Classic translation factor GTPase family. EIF2G subfamily. As to quaternary structure, eukaryotic translation initiation factor 2 eIF2 is a heterotrimeric complex composed of an alpha, a beta and a gamma subunit. The factors eIF-1, eIF-2, eIF-3, TIF5/eIF-5 and methionyl-tRNAi form a multifactor complex (MFC) that may bind to the 40S ribosome. Interacts with cdc123; the interaction is direct.

The protein resides in the cytoplasm. It is found in the cytosol. It catalyses the reaction GTP + H2O = GDP + phosphate + H(+). Its function is as follows. As a subunit of eukaryotic initiation factor 2 eIF2, involved in the early steps of protein synthesis. In the presence of GTP, eIF-2 forms a ternary complex with initiator tRNA Met-tRNAi and then recruits the 40S ribosomal complex and initiation factors eIF-1, eIF-1A and eIF-3 to form the 43S pre-initiation complex (43S PIC), a step that determines the rate of protein translation. The 43S PIC binds to mRNA and scans downstream to the initiation codon, where it forms a 48S initiation complex by codon-anticodon base pairing. This leads to the displacement of eIF-1 to allow GTPase-activating protein (GAP) eIF-5-mediated hydrolysis of eIF2-bound GTP. Hydrolysis of GTP and release of Pi, which makes GTP hydrolysis irreversible, causes the release of the eIF-2-GDP binary complex from the 40S subunit, an event that is essential for the subsequent joining of the 60S ribosomal subunit to form an elongation-competent 80S ribosome. In order for eIF-2 to recycle and catalyze another round of initiation, the GDP bound to eIF-2 must be exchanged with GTP by way of a reaction catalyzed by GDP-GTP exchange factor (GEF) eIF-2B. The protein is Eukaryotic translation initiation factor 2 subunit gamma (tif213) of Schizosaccharomyces pombe (strain 972 / ATCC 24843) (Fission yeast).